The following is a 1038-amino-acid chain: Type I restriction enzyme EcoR124I/EcoR124II endonuclease subunit (1038 aa).

A nuclease domain region spans residues 31–249 (QSESDLEREL…LKDFTATCFQ (219 aa)). Residues 250-469 (KHTLLNVLVN…SYVITDAIRD (220 aa)) are motor 1 domain. In terms of domain architecture, Helicase ATP-binding spans 294-439 (KNWSKPESGG…YQFGFTGTPI (146 aa)). Residue 307–314 (HTTGSGKT) participates in ATP binding. Positions 408-411 (DECH) match the DEAH box motif. The segment at 470–702 (EKVLKFKVDY…YDATKTFGNI (233 aa)) is motor 2 domain. Residues 720–732 (GDKNTKNVVLEKS) are motor 2-helicase linker. The tract at residues 732 to 860 (SYTEYMEGFT…NDIRDWQRRE (129 aa)) is helicase domain. Residues 859 to 886 (REKEAEKKEKSTTDWDDVVFEVDLLKSQ) form a helicase-CTD linker region. The tract at residues 886–1038 (QEINLDYILG…EKFKGVGGKI (153 aa)) is C-terminal domain.

The protein belongs to the HsdR family. A monomer in solution. The type I restriction/modification system is composed of three polypeptides R, M and S; the restriction enzyme has stoichiometry R(2)M(2)S(1) while the methyltransferase is M(2)S(1). There is an equilibrium between R(2)M(2)S(1) and R(1)M(2)S(1); the latter is methylation and translocation proficient but restriction deficient. As to quaternary structure, (Microbial infection) Holoenenzyme interacts with Escherichia phage T7 protein Ocr; this interaction leads to the inhibition of the restriction activity, but may still allow methylation and translocation.

It carries out the reaction Endonucleolytic cleavage of DNA to give random double-stranded fragments with terminal 5'-phosphates, ATP is simultaneously hydrolyzed.. Functionally, the restriction (R) subunit of a type I restriction enzyme that recognizes 5'-GAAN(6)RTCG-3' (for EcoR124I) and 5'-GAAN(7)RTCG-3' (for EcoR124II) and cleaves a random distance away. Subunit R is required for both nuclease and ATPase activities, but not for modification. After locating an unmethylated recognition site, the enzyme complex serves as a molecular motor that translocates DNA in an ATP-dependent manner until a collision occurs that triggers cleavage. The enzyme undergoes major structural changes to bring the motor domains into contact with DNA, allowing DNA translocation. This prevents DNA access to the catalytic domains of both the R and M subunits, preventing both restriction and methylation. The R(1)M(2)S(1) complex translocates an average of 555 bp/second on nicked DNA; the R(2)M(2)S(1) complex translocates at double that speed. The 2 R subunit motors are independent and track along the helical pitch of the DNA, inducing positive supercoiling ahead of themselves. This Escherichia coli protein is Type I restriction enzyme EcoR124I/EcoR124II endonuclease subunit.